The following is a 321-amino-acid chain: Phosphatidate cytidylyltransferase, mitochondrial (321 aa).

Belongs to the TAM41 family. Mg(2+) is required as a cofactor. It depends on Co(2+) as a cofactor. The cofactor is Cu(2+).

Its subcellular location is the mitochondrion inner membrane. It catalyses the reaction a 1,2-diacyl-sn-glycero-3-phosphate + CTP + H(+) = a CDP-1,2-diacyl-sn-glycerol + diphosphate. Its pathway is phospholipid metabolism; CDP-diacylglycerol biosynthesis; CDP-diacylglycerol from sn-glycerol 3-phosphate: step 3/3. Functionally, catalyzes the formation of CDP-diacylglycerol (CDP-DAG) from phosphatidic acid (PA) in the mitochondrial inner membrane. Required for the biosynthesis of the dimeric phospholipid cardiolipin, which stabilizes supercomplexes of the mitochondrial respiratory chain in the mitochondrial inner membrane. In Caenorhabditis elegans, this protein is Phosphatidate cytidylyltransferase, mitochondrial.